The chain runs to 172 residues: Cytidylate kinase (172 aa).

7 to 15 (GLAGTGTTT) is a binding site for ATP.

Belongs to the cytidylate kinase family. Type 2 subfamily.

It localises to the cytoplasm. The enzyme catalyses CMP + ATP = CDP + ADP. It catalyses the reaction dCMP + ATP = dCDP + ADP. The protein is Cytidylate kinase of Methanobrevibacter smithii (strain ATCC 35061 / DSM 861 / OCM 144 / PS).